Here is a 91-residue protein sequence, read N- to C-terminus: Small ribosomal subunit protein uS15 (91 aa).

Belongs to the universal ribosomal protein uS15 family. As to quaternary structure, part of the 30S ribosomal subunit. Forms a bridge to the 50S subunit in the 70S ribosome, contacting the 23S rRNA.

Its function is as follows. One of the primary rRNA binding proteins, it binds directly to 16S rRNA where it helps nucleate assembly of the platform of the 30S subunit by binding and bridging several RNA helices of the 16S rRNA. In terms of biological role, forms an intersubunit bridge (bridge B4) with the 23S rRNA of the 50S subunit in the ribosome. This chain is Small ribosomal subunit protein uS15, found in Rickettsia typhi (strain ATCC VR-144 / Wilmington).